A 384-amino-acid polypeptide reads, in one-letter code: Putative glutamate--cysteine ligase 2 (384 aa).

This sequence belongs to the glutamate--cysteine ligase type 2 family. YbdK subfamily.

It catalyses the reaction L-cysteine + L-glutamate + ATP = gamma-L-glutamyl-L-cysteine + ADP + phosphate + H(+). Functionally, ATP-dependent carboxylate-amine ligase which exhibits weak glutamate--cysteine ligase activity. The protein is Putative glutamate--cysteine ligase 2 of Ruegeria pomeroyi (strain ATCC 700808 / DSM 15171 / DSS-3) (Silicibacter pomeroyi).